We begin with the raw amino-acid sequence, 259 residues long: Protein snail homolog Sna (259 aa).

The tract at residues 1–20 (MPRSFLVKKHFSASKKPNYS) is SNAG domain. The disordered stretch occupies residues 71–113 (DYKKSPISPSSSDDSSKPLDLTSFSSEDEGGKTSDPPSPASSA). 5 C2H2-type zinc fingers span residues 119–141 (FQCN…KQLH), 150–172 (FSCK…IRSH), 176–198 (CVCK…IRTH), 204–226 (FSCT…LQTH), and 232–255 (YQCK…ETGC).

It belongs to the snail C2H2-type zinc-finger protein family. In terms of assembly, interacts (via SNAG domain) with limd1 (via LIM domains), wtip (via LIM domains) and ajuba (via LIM domains). Interacts with elp3; the interaction inhibits snai1 ubiquitination and promotes snai1 stability. In terms of processing, ubiquitinated. In terms of tissue distribution, maternal expression is nearly completely restricted to the vegetal hemisphere. Zygotic expression begins in the dorsal marginal zone just before gastrulation (stage 9), and is almost completely absent in the animal hemisphere. At mid-gastrula (stage 11-11.5), expression begins in the ectoderm in an arc surrounding the prospective neural plate. From stage 12, anterior expression is down-regulated, while levels are increased in the prospective neural crest.

It localises to the nucleus. Transcriptional repressor. Acts upstream of snai2/slug, zic5 and other neural crest markers in the specification of the neural crest and neural crest migration. Involved in embryonic mesoderm formation. This chain is Protein snail homolog Sna (snai1), found in Xenopus laevis (African clawed frog).